The sequence spans 240 residues: Leucyl/phenylalanyl-tRNA--protein transferase (240 aa).

This sequence belongs to the L/F-transferase family.

Its subcellular location is the cytoplasm. The enzyme catalyses N-terminal L-lysyl-[protein] + L-leucyl-tRNA(Leu) = N-terminal L-leucyl-L-lysyl-[protein] + tRNA(Leu) + H(+). It catalyses the reaction N-terminal L-arginyl-[protein] + L-leucyl-tRNA(Leu) = N-terminal L-leucyl-L-arginyl-[protein] + tRNA(Leu) + H(+). It carries out the reaction L-phenylalanyl-tRNA(Phe) + an N-terminal L-alpha-aminoacyl-[protein] = an N-terminal L-phenylalanyl-L-alpha-aminoacyl-[protein] + tRNA(Phe). Functions in the N-end rule pathway of protein degradation where it conjugates Leu, Phe and, less efficiently, Met from aminoacyl-tRNAs to the N-termini of proteins containing an N-terminal arginine or lysine. The protein is Leucyl/phenylalanyl-tRNA--protein transferase of Maridesulfovibrio salexigens (strain ATCC 14822 / DSM 2638 / NCIMB 8403 / VKM B-1763) (Desulfovibrio salexigens).